Consider the following 150-residue polypeptide: D-aminoacyl-tRNA deacylase (150 aa).

The Gly-cisPro motif, important for rejection of L-amino acids signature appears at 136 to 137 (GP).

This sequence belongs to the DTD family. Homodimer.

It localises to the cytoplasm. It catalyses the reaction glycyl-tRNA(Ala) + H2O = tRNA(Ala) + glycine + H(+). It carries out the reaction a D-aminoacyl-tRNA + H2O = a tRNA + a D-alpha-amino acid + H(+). Functionally, an aminoacyl-tRNA editing enzyme that deacylates mischarged D-aminoacyl-tRNAs. Also deacylates mischarged glycyl-tRNA(Ala), protecting cells against glycine mischarging by AlaRS. Acts via tRNA-based rather than protein-based catalysis; rejects L-amino acids rather than detecting D-amino acids in the active site. By recycling D-aminoacyl-tRNA to D-amino acids and free tRNA molecules, this enzyme counteracts the toxicity associated with the formation of D-aminoacyl-tRNA entities in vivo and helps enforce protein L-homochirality. This chain is D-aminoacyl-tRNA deacylase, found in Staphylococcus carnosus (strain TM300).